A 247-amino-acid polypeptide reads, in one-letter code: uncharacterized protein (247 aa).

One can recognise an N-acetyltransferase domain in the interval 102–247; that stretch reads RSIMSRTNDN…ISEHHYRIKR (146 aa).

The protein belongs to the acetyltransferase family.

This is an uncharacterized protein from Bacillus subtilis (strain 168).